Consider the following 70-residue polypeptide: Large ribosomal subunit protein bL31 (70 aa).

Cys-16, Cys-18, Cys-38, and Cys-41 together coordinate Zn(2+).

It belongs to the bacterial ribosomal protein bL31 family. Type A subfamily. In terms of assembly, part of the 50S ribosomal subunit. It depends on Zn(2+) as a cofactor.

In terms of biological role, binds the 23S rRNA. The chain is Large ribosomal subunit protein bL31 from Vesicomyosocius okutanii subsp. Calyptogena okutanii (strain HA).